The following is a 483-amino-acid chain: MLLYNTLGRQKEEFTPLRPGKVHMYVCGITAYDYCHIGHARSALVFDVLVRQLRHMGLDVTFVRNFTDVDDKIINRANKEGLDWREVAQTYINAFYEDMDRLGVQRADVEPRATDHIQEIQDLCAKLVAEGKAYATTSGDVYFRVRSYPPYGKLSGRSLDELLSGARVAPGEEKEDPLDFALWKAAKPGEPSWESPWGPGRPGWHIECSAMSESYLPLDIHGGGQDLVFPHHENEIAQTEAVCHCHLARYWVHNGFVQVNAEKMSKSLGNFKTIRDILESYLPETLRFFLLGKHYRSPIDFTAEGMDEAEKALHRVYTALLETQKALTREKWKKSPLPAQLTEDWAAQAEALDEAMNDDLNTAQALGHIFTQVRLVNRLLEDKTLRAAEAGRDLLQDFLARAEQWNTRLGLFGQQPEAFLADLRRIRAARRNIDIPRVEALLQERQEARANKDFARSDALRQALLDLGVSVQDTPEGQNWDLE.

Cys27 lines the Zn(2+) pocket. The 'HIGH' region signature appears at 29–39; sequence ITAYDYCHIGH. The Zn(2+) site is built by Cys208, His231, and Glu235. The 'KMSKS' region signature appears at 263-267; the sequence is KMSKS. ATP is bound at residue Lys266.

The protein belongs to the class-I aminoacyl-tRNA synthetase family. As to quaternary structure, monomer. The cofactor is Zn(2+).

It is found in the cytoplasm. It carries out the reaction tRNA(Cys) + L-cysteine + ATP = L-cysteinyl-tRNA(Cys) + AMP + diphosphate. This Desulfovibrio desulfuricans (strain ATCC 27774 / DSM 6949 / MB) protein is Cysteine--tRNA ligase.